Here is a 557-residue protein sequence, read N- to C-terminus: Formate--tetrahydrofolate ligase (557 aa).

65–72 is a binding site for ATP; sequence TPAGEGKT.

Belongs to the formate--tetrahydrofolate ligase family.

The enzyme catalyses (6S)-5,6,7,8-tetrahydrofolate + formate + ATP = (6R)-10-formyltetrahydrofolate + ADP + phosphate. Its pathway is one-carbon metabolism; tetrahydrofolate interconversion. This Methylobacterium radiotolerans (strain ATCC 27329 / DSM 1819 / JCM 2831 / NBRC 15690 / NCIMB 10815 / 0-1) protein is Formate--tetrahydrofolate ligase.